A 160-amino-acid chain; its full sequence is SsrA-binding protein (160 aa).

The interval K131–D160 is disordered.

Belongs to the SmpB family.

The protein resides in the cytoplasm. Required for rescue of stalled ribosomes mediated by trans-translation. Binds to transfer-messenger RNA (tmRNA), required for stable association of tmRNA with ribosomes. tmRNA and SmpB together mimic tRNA shape, replacing the anticodon stem-loop with SmpB. tmRNA is encoded by the ssrA gene; the 2 termini fold to resemble tRNA(Ala) and it encodes a 'tag peptide', a short internal open reading frame. During trans-translation Ala-aminoacylated tmRNA acts like a tRNA, entering the A-site of stalled ribosomes, displacing the stalled mRNA. The ribosome then switches to translate the ORF on the tmRNA; the nascent peptide is terminated with the 'tag peptide' encoded by the tmRNA and targeted for degradation. The ribosome is freed to recommence translation, which seems to be the essential function of trans-translation. This chain is SsrA-binding protein, found in Pseudomonas fluorescens (strain ATCC BAA-477 / NRRL B-23932 / Pf-5).